A 73-amino-acid polypeptide reads, in one-letter code: uncharacterized protein (73 aa).

A signal peptide spans 1-23 (MLHLIKMVSKIVLLITLVFIVSA).

This is an uncharacterized protein from Acheta domesticus (House cricket).